Here is a 325-residue protein sequence, read N- to C-terminus: Cell division protein ZipA (325 aa).

Over 1–5 (MQELR) the chain is Periplasmic. Residues 6–26 (LVLILVGALAIAALLFHGLWT) traverse the membrane as a helical segment. Topologically, residues 27 to 325 (SRKETSSKFG…KQRVKVFCRK (299 aa)) are cytoplasmic.

It belongs to the ZipA family. As to quaternary structure, interacts with FtsZ via their C-terminal domains.

The protein localises to the cell inner membrane. Its function is as follows. Essential cell division protein that stabilizes the FtsZ protofilaments by cross-linking them and that serves as a cytoplasmic membrane anchor for the Z ring. Also required for the recruitment to the septal ring of downstream cell division proteins. In Aliivibrio fischeri (strain MJ11) (Vibrio fischeri), this protein is Cell division protein ZipA.